The primary structure comprises 64 residues: Large ribosomal subunit protein bL35 (64 aa).

Positions 1-54 (MPKIKSNSGAAKRFKKTAHGFKHKQSFRSHILTKKSTKRKRQLRGMKQIHDADK) are disordered. The span at 12–44 (KRFKKTAHGFKHKQSFRSHILTKKSTKRKRQLR) shows a compositional bias: basic residues.

Belongs to the bacterial ribosomal protein bL35 family.

In Chromohalobacter salexigens (strain ATCC BAA-138 / DSM 3043 / CIP 106854 / NCIMB 13768 / 1H11), this protein is Large ribosomal subunit protein bL35.